The chain runs to 636 residues: Chaperone protein DnaK (636 aa).

A Phosphothreonine; by autocatalysis modification is found at T198. The interval 602-636 (QAEGAQPGGEAAGEASAKDEKVVDADFEEVKDDKK) is disordered. Acidic residues predominate over residues 626-636 (ADFEEVKDDKK).

The protein belongs to the heat shock protein 70 family.

In terms of biological role, acts as a chaperone. The chain is Chaperone protein DnaK from Geobacter sulfurreducens (strain ATCC 51573 / DSM 12127 / PCA).